Here is a 258-residue protein sequence, read N- to C-terminus: UPF0246 protein ACIAD2218 (258 aa).

This sequence belongs to the UPF0246 family.

In Acinetobacter baylyi (strain ATCC 33305 / BD413 / ADP1), this protein is UPF0246 protein ACIAD2218.